The sequence spans 123 residues: Ribosome-binding factor A (123 aa).

This sequence belongs to the RbfA family. As to quaternary structure, monomer. Binds 30S ribosomal subunits, but not 50S ribosomal subunits or 70S ribosomes.

It is found in the cytoplasm. Functionally, one of several proteins that assist in the late maturation steps of the functional core of the 30S ribosomal subunit. Associates with free 30S ribosomal subunits (but not with 30S subunits that are part of 70S ribosomes or polysomes). Required for efficient processing of 16S rRNA. May interact with the 5'-terminal helix region of 16S rRNA. The chain is Ribosome-binding factor A from Solibacter usitatus (strain Ellin6076).